Here is a 180-residue protein sequence, read N- to C-terminus: UPF0227 protein YcfP (180 aa).

This sequence belongs to the UPF0227 family.

The sequence is that of UPF0227 protein YcfP from Salmonella gallinarum (strain 287/91 / NCTC 13346).